Reading from the N-terminus, the 331-residue chain is 3-dehydrosphinganine reductase TSC10B (331 aa).

At 1-7 (MAAIFSL) the chain is on the lumenal side. The chain crosses the membrane as a helical span at residues 8 to 28 (FLFFILFIVSLLIILSFIVRP). Residues 29 to 262 (RSVTIPIKFR…ICFDGIKAGK (234 aa)) are Cytoplasmic-facing. NADPH is bound by residues G44, S46, S47, G48, R69, K73, and D95. The short motif at 44–48 (GGSSG) is the GXSXG element. The active-site Proton donor is the S172. Catalysis depends on Y186, which acts as the Proton acceptor. NADP(+) contacts are provided by Y186 and K190. K190 serves as the catalytic Lowers pKa of active site Tyr. A helical membrane pass occupies residues 263-283 (FTVTCHFIGFLLSIASTGMSP). Topologically, residues 284 to 286 (QGS) are lumenal. Residues 287–307 (FWLALTEVMFGGLIRLASLVF) form a helical membrane-spanning segment. Over 308-331 (QWQWYKTIEKWSQRNKKEVNSKLA) the chain is Cytoplasmic.

This sequence belongs to the short-chain dehydrogenases/reductases (SDR) family. As to expression, expressed in roots, leaves, stems and flowers.

It is found in the endoplasmic reticulum membrane. It catalyses the reaction sphinganine + NADP(+) = 3-oxosphinganine + NADPH + H(+). Its pathway is lipid metabolism; sphingolipid metabolism. Functionally, catalyzes the reduction of 3'-oxosphinganine (3-ketodihydrosphingosine/KDS) to sphinganine (dihydrosphingosine/DHS), the second step of de novo sphingolipid biosynthesis. In plants, sphingolipids seems to play a critical role in mineral ion homeostasis, most likely through their involvement in the ion transport functionalities of membrane systems in the root. Is stereospecific for D-erythro-DHS production and does not produce L-threo-DHS. The sequence is that of 3-dehydrosphinganine reductase TSC10B (TSC10B) from Arabidopsis thaliana (Mouse-ear cress).